Reading from the N-terminus, the 220-residue chain is MADS-box protein AGL24 (220 aa).

The region spanning 1-61 (MAREKIRIKK…GKLFEFSSSR (61 aa)) is the MADS-box domain. Positions 87–177 (LRLENCNLSR…RDKLETLERA (91 aa)) constitute a K-box domain. Polar residues predominate over residues 190-200 (SVTTNVSSYDS). The tract at residues 190 to 220 (SVTTNVSSYDSGTPLEDDSDTSLKLGLPSWE) is disordered.

As to quaternary structure, interacts with IMK3/MRLK. Forms a homodimer and heterodimer with SOC1, AP1 and SVP through MADS-box domain. Interacts with the SEU-LUG corepressor complex when complexed to AP1. Interacts with AGL15 and AGL16. Phosphorylated by IMK3. Induced by vernalization. In terms of tissue distribution, mostly expressed in shoot apical meristems, including floral meristems. Also detected in stems, seedlings, leaves, flowers and siliques, and, to a lower extent, in roots.

The protein localises to the nucleus. The protein resides in the cytoplasm. Its function is as follows. Transcription activator that mediates floral transition in response to vernalization. Promotes inflorescence fate in apical meristems. Acts in a dosage-dependent manner. Probably involved in the transduction of RLK-mediated signaling (e.g. IMK3 pathway). Together with AP1 and SVP, controls the identity of the floral meristem and regulates expression of class B, C and E genes. When associated with SOC1, mediates effect of gibberellins on flowering under short-day conditions, and regulates the expression of LEAFY (LFY), which links floral induction and floral development. Confers inflorescence characteristics to floral primordia and early flowering. This chain is MADS-box protein AGL24 (AGL24), found in Arabidopsis thaliana (Mouse-ear cress).